A 111-amino-acid chain; its full sequence is uncharacterized protein (111 aa).

The protein resides in the cytoplasm. Its subcellular location is the nucleus. This is an uncharacterized protein from Schizosaccharomyces pombe (strain 972 / ATCC 24843) (Fission yeast).